A 338-amino-acid polypeptide reads, in one-letter code: N-acetyl-gamma-glutamyl-phosphate reductase (338 aa).

Residue Cys148 is part of the active site.

Belongs to the NAGSA dehydrogenase family. Type 1 subfamily.

It is found in the cytoplasm. It catalyses the reaction N-acetyl-L-glutamate 5-semialdehyde + phosphate + NADP(+) = N-acetyl-L-glutamyl 5-phosphate + NADPH + H(+). Its pathway is amino-acid biosynthesis; L-arginine biosynthesis; N(2)-acetyl-L-ornithine from L-glutamate: step 3/4. Its function is as follows. Catalyzes the NADPH-dependent reduction of N-acetyl-5-glutamyl phosphate to yield N-acetyl-L-glutamate 5-semialdehyde. The chain is N-acetyl-gamma-glutamyl-phosphate reductase from Leptospira interrogans serogroup Icterohaemorrhagiae serovar Lai (strain 56601).